The chain runs to 284 residues: Ribosomal RNA small subunit methyltransferase A (284 aa).

Residues Asn28, Leu30, Gly55, Glu77, Asp103, and Asn123 each contribute to the S-adenosyl-L-methionine site.

The protein belongs to the class I-like SAM-binding methyltransferase superfamily. rRNA adenine N(6)-methyltransferase family. RsmA subfamily.

It localises to the cytoplasm. It catalyses the reaction adenosine(1518)/adenosine(1519) in 16S rRNA + 4 S-adenosyl-L-methionine = N(6)-dimethyladenosine(1518)/N(6)-dimethyladenosine(1519) in 16S rRNA + 4 S-adenosyl-L-homocysteine + 4 H(+). Functionally, specifically dimethylates two adjacent adenosines (A1518 and A1519) in the loop of a conserved hairpin near the 3'-end of 16S rRNA in the 30S particle. May play a critical role in biogenesis of 30S subunits. The chain is Ribosomal RNA small subunit methyltransferase A from Bradyrhizobium diazoefficiens (strain JCM 10833 / BCRC 13528 / IAM 13628 / NBRC 14792 / USDA 110).